Consider the following 294-residue polypeptide: Phosphate acetyltransferase (294 aa).

The protein belongs to the phosphate acetyltransferase and butyryltransferase family. Homotetramer.

It is found in the cytoplasm. The enzyme catalyses acetyl-CoA + phosphate = acetyl phosphate + CoA. It functions in the pathway metabolic intermediate biosynthesis; acetyl-CoA biosynthesis; acetyl-CoA from acetate: step 2/2. Its function is as follows. In addition to acetyl-CoA (100%), the enzyme accepts propionyl-CoA (60%) and butyryl-CoA (30%). The sequence is that of Phosphate acetyltransferase (pta) from Thermotoga maritima (strain ATCC 43589 / DSM 3109 / JCM 10099 / NBRC 100826 / MSB8).